The primary structure comprises 475 residues: Ribulose bisphosphate carboxylase large chain (475 aa).

The propeptide occupies 1–2; sequence MS. P3 carries the N-acetylproline modification. An N6,N6,N6-trimethyllysine modification is found at K14. Substrate is bound by residues N123 and T173. K175 serves as the catalytic Proton acceptor. A substrate-binding site is contributed by K177. Mg(2+)-binding residues include K201, D203, and E204. K201 carries the N6-carboxylysine modification. H294 functions as the Proton acceptor in the catalytic mechanism. Positions 295, 327, and 379 each coordinate substrate.

Belongs to the RuBisCO large chain family. Type I subfamily. Heterohexadecamer of 8 large chains and 8 small chains; disulfide-linked. The disulfide link is formed within the large subunit homodimers. It depends on Mg(2+) as a cofactor. Post-translationally, the disulfide bond which can form in the large chain dimeric partners within the hexadecamer appears to be associated with oxidative stress and protein turnover.

The protein resides in the plastid. It localises to the chloroplast. The enzyme catalyses 2 (2R)-3-phosphoglycerate + 2 H(+) = D-ribulose 1,5-bisphosphate + CO2 + H2O. It catalyses the reaction D-ribulose 1,5-bisphosphate + O2 = 2-phosphoglycolate + (2R)-3-phosphoglycerate + 2 H(+). Functionally, ruBisCO catalyzes two reactions: the carboxylation of D-ribulose 1,5-bisphosphate, the primary event in carbon dioxide fixation, as well as the oxidative fragmentation of the pentose substrate in the photorespiration process. Both reactions occur simultaneously and in competition at the same active site. This chain is Ribulose bisphosphate carboxylase large chain, found in Picea sitchensis (Sitka spruce).